A 388-amino-acid chain; its full sequence is Beta-1,4-galactosyltransferase 5 (388 aa).

Residues 1 to 14 (MRARRGLLRLPRRS) are Cytoplasmic-facing. The chain crosses the membrane as a helical; Signal-anchor for type II membrane protein span at residues 15 to 35 (LLAALFFFSLSSSLLYFVYVA). Topologically, residues 36–388 (PGIVNTYLFM…TPELAQVTEY (353 aa)) are lumenal. 4 N-linked (GlcNAc...) asparagine glycosylation sites follow: Asn77, Asn81, Asn90, and Asn128. An intrachain disulfide couples Cys114 to Cys158. Residues 169-173 (PFRNR), 208-210 (FNR), 235-236 (VD), Tyr264, and Trp296 contribute to the UDP-alpha-D-galactose site. Residues Cys229 and Cys248 are joined by a disulfide bond. Asp236 provides a ligand contact to Mn(2+). 298–301 (GEDD) is a binding site for N-acetyl-D-glucosamine. His329 lines the Mn(2+) pocket. Residue 329–330 (HH) participates in UDP-alpha-D-galactose binding. Arg340 serves as a coordination point for N-acetyl-D-glucosamine. 3 N-linked (GlcNAc...) asparagine glycosylation sites follow: Asn360, Asn364, and Asn373.

Belongs to the glycosyltransferase 7 family. The cofactor is Mn(2+). As to expression, highest levels in heart, brain, liver and kidney with lower levels in spleen, lung and testis.

It is found in the golgi apparatus. The protein resides in the golgi stack membrane. The enzyme catalyses a beta-D-glucosyl-(1&lt;-&gt;1')-N-acylsphing-4-enine + UDP-alpha-D-galactose = a beta-D-Gal-(1-&gt;4)-beta-D-Glc-(1&lt;-&gt;1)-Cer(d18:1(4E)) + UDP + H(+). Its pathway is protein modification; protein glycosylation. It participates in sphingolipid metabolism. In terms of biological role, catalyzes the synthesis of lactosylceramide (LacCer) via the transfer of galactose from UDP-galactose to glucosylceramide (GlcCer). LacCer is the starting point in the biosynthesis of all gangliosides (membrane-bound glycosphingolipids) which play pivotal roles in the CNS including neuronal maturation and axonal and myelin formation. Plays a role in the glycosylation of BMPR1A and regulation of its protein stability. Essential for extraembryonic development during early embryogenesis. The chain is Beta-1,4-galactosyltransferase 5 from Mus musculus (Mouse).